The primary structure comprises 94 residues: Large ribosomal subunit protein uL29 (94 aa).

A disordered region spans residues 66 to 94; that stretch reads NPGERKSRVLSRAKRKKKNLARLSAKVKG. Basic residues predominate over residues 73 to 94; sequence RVLSRAKRKKKNLARLSAKVKG.

Belongs to the universal ribosomal protein uL29 family.

In Leptospira borgpetersenii serovar Hardjo-bovis (strain JB197), this protein is Large ribosomal subunit protein uL29.